Reading from the N-terminus, the 430-residue chain is MDQYRDLPKEDPDTAIEYESGVDEESSLKIEKFRVLIFGKDNSQDDLVKSVFNLSKLSEKEKMPFGIKCESEENPNFESYHSKVGKKSCKRFMRWLKANAFAEERDIDCIWYQLNLLDISDEDILCLQYLQGCLIPIVSIIYDFNEFLSPFTKSFLSKIGESNTITVKGMPLADVLVFRKKVLKLVSQLSFMTDRKELVYTTCLALEDDDAYTNFVSAQQEDSSCKFYGGILIGVSHCKYAAAGASYPLPIPASGLLAQKLAIGLLCKDIIKLWNLCPESSILTKEILLELPKASDVAKSIGKMILTSMFVPLWLLKGIWEAPATAKIIIGSIADVTLPVQRMYYFIKAGGKLDVPTIHAFYQHYKEFVRPKCLEHIAEITTFNVVTAFSSEAVYQEAIRLLDRFRYVSKSSEEDLIVPSFVVNDLITYD.

Its subcellular location is the cytoplasm. The protein localises to the nucleus. This is an uncharacterized protein from Schizosaccharomyces pombe (strain 972 / ATCC 24843) (Fission yeast).